We begin with the raw amino-acid sequence, 501 residues long: Nucleic-acid-binding protein from transposon X-element (501 aa).

2 disordered regions span residues 20–71 and 105–128; these read SSPQ…GNSN and AAAK…SKPP. Residues 285–302 form a CCHC-type zinc finger; the sequence is VQCHRCQQIGHTAKYCRK. 2 disordered regions span residues 353 to 385 and 400 to 443; these read RPRS…SRGG and QPMS…TDAS. A compositionally biased stretch (low complexity) spans 407–422; that stretch reads QQQKQKQQPYDGSPSR. A compositionally biased stretch (polar residues) spans 434-443; sequence GTLQRSTDAS.

The protein localises to the virion. Strongly basic protein that binds directly to retroviral RNA and may be involved in its packaging and in the reverse transcription process. In Drosophila melanogaster (Fruit fly), this protein is Nucleic-acid-binding protein from transposon X-element.